Consider the following 503-residue polypeptide: GMP synthase [glutamine-hydrolyzing] (503 aa).

A Glutamine amidotransferase type-1 domain is found at 3-189 (PVLVVDFGSQ…AFLSSFAAPN (187 aa)). Cys80 serves as the catalytic Nucleophile. Catalysis depends on residues His165 and Glu167. The 191-residue stretch at 190-380 (WDPEQTICGT…LGIPKHIVHR (191 aa)) folds into the GMPS ATP-PPase domain. 217–223 (SGGVDSV) is an ATP binding site.

In terms of assembly, homodimer.

The catalysed reaction is XMP + L-glutamine + ATP + H2O = GMP + L-glutamate + AMP + diphosphate + 2 H(+). The protein operates within purine metabolism; GMP biosynthesis; GMP from XMP (L-Gln route): step 1/1. Its function is as follows. Catalyzes the synthesis of GMP from XMP. This is GMP synthase [glutamine-hydrolyzing] from Tropheryma whipplei (strain Twist) (Whipple's bacillus).